The following is a 318-amino-acid chain: Melanoma-associated antigen 8 (318 aa).

The disordered stretch occupies residues 1–103 (MLLGQKSQRY…GPSTSPDPAH (103 aa)). The MAGE domain occupies 112 to 311 (LDEKVAELVR…ISYPSLHEEA (200 aa)).

Expressed in many tumors of several types, such as melanoma, head and neck squamous cell carcinoma, lung carcinoma and breast carcinoma, but not in normal tissues except for testis and placenta.

Its function is as follows. Not known, though may play a role in embryonal development and tumor transformation or aspects of tumor progression. The protein is Melanoma-associated antigen 8 (MAGEA8) of Homo sapiens (Human).